Reading from the N-terminus, the 120-residue chain is Large ribosomal subunit protein uL18 (120 aa).

Belongs to the universal ribosomal protein uL18 family. Part of the 50S ribosomal subunit; part of the 5S rRNA/L5/L18/L25 subcomplex. Contacts the 5S and 23S rRNAs.

In terms of biological role, this is one of the proteins that bind and probably mediate the attachment of the 5S RNA into the large ribosomal subunit, where it forms part of the central protuberance. This is Large ribosomal subunit protein uL18 from Lawsonia intracellularis (strain PHE/MN1-00).